Consider the following 91-residue polypeptide: Cytochrome b-c1 complex subunit 10, mitochondrial (91 aa).

The Mitochondrial matrix segment spans residues Met-1–Lys-34. The chain crosses the membrane as a helical span at residues Gln-35–Ala-58. The Mitochondrial intermembrane portion of the chain corresponds to Ser-59–Phe-91.

The protein belongs to the UQCR11/QCR10 family. Component of the ubiquinol-cytochrome c oxidoreductase (cytochrome b-c1 complex, complex III, CIII), a multisubunit enzyme composed of 10 subunits. The complex is composed of 3 respiratory subunits cytochrome b (cob), cytochrome c1 (cyt-1) and Rieske protein (fes-1), 2 core protein subunits pep and ucr-1, and 5 low-molecular weight protein subunits qcr6, qcr7, qcr8, qcr9 and probably NCU16844/qcr10. The complex exists as an obligatory dimer and forms supercomplexes (SCs) in the inner mitochondrial membrane with NADH-ubiquinone oxidoreductase (complex I, CI) and cytochrome c oxidase (complex IV, CIV), resulting in different assemblies (supercomplexes SCI(1)III(2), SCIII(2)IV(1) and SCIII(2)IV(2) as well as higher order I(x)III(y)IV(z) megacomplexes).

It localises to the mitochondrion inner membrane. In terms of biological role, component of the ubiquinol-cytochrome c oxidoreductase, a multisubunit transmembrane complex that is part of the mitochondrial electron transport chain which drives oxidative phosphorylation. The respiratory chain contains 3 multisubunit complexes succinate dehydrogenase (complex II, CII), ubiquinol-cytochrome c oxidoreductase (cytochrome b-c1 complex, complex III, CIII) and cytochrome c oxidase (complex IV, CIV), that cooperate to transfer electrons derived from NADH and succinate to molecular oxygen, creating an electrochemical gradient over the inner membrane that drives transmembrane transport and the ATP synthase. The cytochrome b-c1 complex catalyzes electron transfer from ubiquinol to cytochrome c, linking this redox reaction to translocation of protons across the mitochondrial inner membrane, with protons being carried across the membrane as hydrogens on the quinol. In the process called Q cycle, 2 protons are consumed from the matrix, 4 protons are released into the intermembrane space and 2 electrons are passed to cytochrome c. The protein is Cytochrome b-c1 complex subunit 10, mitochondrial of Neurospora crassa (strain ATCC 24698 / 74-OR23-1A / CBS 708.71 / DSM 1257 / FGSC 987).